A 548-amino-acid polypeptide reads, in one-letter code: Glucan 1,4-alpha-maltotetraohydrolase (548 aa).

The signal sequence occupies residues 1–21; that stretch reads MSHILRAAVLAAMLLPLPSMA. Residues D22, Q23, H34, D37, and E38 each contribute to the Ca(2+) site. 99-100 provides a ligand contact to substrate; the sequence is YF. N137 contacts Ca(2+). Residue H138 participates in substrate binding. An intrachain disulfide couples C161 to C171. D172 and D175 together coordinate Ca(2+). 177 to 181 contacts substrate; the sequence is FIGGD. D183 contacts Ca(2+). R212 is a substrate binding site. Catalysis depends on D214, which acts as the Nucleophile. 217 to 218 contributes to the substrate binding site; the sequence is RG. Residue G218 participates in Ca(2+) binding. C237 and C272 form a disulfide bridge. E240 (proton donor) is an active-site residue. Positions 314 and 326 each coordinate substrate. One can recognise a CBM20 domain in the interval 446-548; it reads GEPGALVSVS…SEGATTVGRL (103 aa). Positions 529–542 are enriched in polar residues; the sequence is QGGANNSLTPSEGA. The segment at 529–548 is disordered; it reads QGGANNSLTPSEGATTVGRL.

Belongs to the glycosyl hydrolase 13 family. Monomer. It depends on Ca(2+) as a cofactor.

It is found in the secreted. It catalyses the reaction Hydrolysis of (1-&gt;4)-alpha-D-glucosidic linkages in amylaceous polysaccharides, to remove successive maltotetraose residues from the non-reducing chain ends.. Its pathway is glycan degradation; starch degradation. The sequence is that of Glucan 1,4-alpha-maltotetraohydrolase (amyP) from Stutzerimonas stutzeri (Pseudomonas stutzeri).